Consider the following 102-residue polypeptide: MRIAIVGGQNHNQETYGKLLGKTGRVEIHFYDGIPKKHNKRNLEKLIKDVDLVIVILGACSHASMWDTKKAAKKCHKEVLFSRGIGISSIVKQIAGKLAYTA.

It belongs to the UPF0751 family.

In Desulfitobacterium hafniense (strain Y51), this protein is UPF0751 protein DSY4013.